The sequence spans 646 residues: Threonine--tRNA ligase (646 aa).

The 63-residue stretch at 1 to 63 (MADLSIIFPD…SSGGSIEIIT (63 aa)) folds into the TGS domain. The catalytic stretch occupies residues 244–541 (DHRKLGKELG…LIEEYKGAFP (298 aa)). Residues Cys-337, His-388, and His-518 each coordinate Zn(2+).

It belongs to the class-II aminoacyl-tRNA synthetase family. As to quaternary structure, homodimer. Zn(2+) is required as a cofactor.

The protein localises to the cytoplasm. The enzyme catalyses tRNA(Thr) + L-threonine + ATP = L-threonyl-tRNA(Thr) + AMP + diphosphate + H(+). In terms of biological role, catalyzes the attachment of threonine to tRNA(Thr) in a two-step reaction: L-threonine is first activated by ATP to form Thr-AMP and then transferred to the acceptor end of tRNA(Thr). Also edits incorrectly charged L-seryl-tRNA(Thr). The protein is Threonine--tRNA ligase of Oceanobacillus iheyensis (strain DSM 14371 / CIP 107618 / JCM 11309 / KCTC 3954 / HTE831).